The primary structure comprises 337 residues: S-adenosylmethionine:tRNA ribosyltransferase-isomerase (337 aa).

It belongs to the QueA family. In terms of assembly, monomer.

It is found in the cytoplasm. It carries out the reaction 7-aminomethyl-7-carbaguanosine(34) in tRNA + S-adenosyl-L-methionine = epoxyqueuosine(34) in tRNA + adenine + L-methionine + 2 H(+). It participates in tRNA modification; tRNA-queuosine biosynthesis. In terms of biological role, transfers and isomerizes the ribose moiety from AdoMet to the 7-aminomethyl group of 7-deazaguanine (preQ1-tRNA) to give epoxyqueuosine (oQ-tRNA). This Legionella pneumophila (strain Lens) protein is S-adenosylmethionine:tRNA ribosyltransferase-isomerase.